The following is a 514-amino-acid chain: Cytochrome P450 71AP13 (514 aa).

Residues 20-37 (HSSLFAFSLLILLLKFIY) traverse the membrane as a helical segment. N-linked (GlcNAc...) asparagine glycosylation is found at Asn-127 and Asn-184. Heme is bound at residue Cys-455.

This sequence belongs to the cytochrome P450 family. Heme serves as cofactor. In terms of tissue distribution, expressed in fruit kernel, seedlings, leaves and stems.

It is found in the membrane. The polypeptide is Cytochrome P450 71AP13 (Prunus mume (Japanese apricot)).